A 65-amino-acid polypeptide reads, in one-letter code: UPF0434 protein BBta_0300 (65 aa).

It belongs to the UPF0434 family.

The chain is UPF0434 protein BBta_0300 from Bradyrhizobium sp. (strain BTAi1 / ATCC BAA-1182).